The chain runs to 571 residues: Hemagglutinin-neuraminidase (571 aa).

The Intravirion portion of the chain corresponds to 1–26 (MDRAVSRVVLENEEREAKNTWRFVFR). A helical transmembrane segment spans residues 27–47 (IAVLLLIVMTLAISAAALVYS). Topologically, residues 48 to 571 (MGASTPRDLA…LVEILKDDRV (524 aa)) are virion surface. N119 carries N-linked (GlcNAc...) asparagine; by host glycosylation. The tract at residues 124 to 152 (GAPVHDPDYIGGIGKELIVDDTSDVTSFY) is important for interaction with fusion/F protein. Cystine bridges form between C172–C196, C186–C247, and C238–C251. The interval 234-239 (NRKSCS) is involved in neuraminidase activity. N341 carries N-linked (GlcNAc...) asparagine; by host glycosylation. A disulfide bridge connects residues C455 and C465. N-linked (GlcNAc...) asparagine; by host glycosylation is found at N481 and N508. A disulfide bond links C531 and C542.

The protein belongs to the paramyxoviruses hemagglutinin-neuraminidase family. Homotetramer; composed of disulfide-linked homodimers. Interacts with F protein trimer. Interacts with host CG-1B; this interaction inhibits viral adsorption and replication rather than internalization.

The protein resides in the virion membrane. The protein localises to the host cell membrane. The catalysed reaction is Hydrolysis of alpha-(2-&gt;3)-, alpha-(2-&gt;6)-, alpha-(2-&gt;8)- glycosidic linkages of terminal sialic acid residues in oligosaccharides, glycoproteins, glycolipids, colominic acid and synthetic substrates.. Mediates the viral entry into the host cell together with fusion/F protein. Attaches the virus to sialic acid-containing cell receptors and thereby initiates infection. Binding of HN protein to the receptor induces a conformational change that allows the F protein to trigger virion/cell membranes fusion. Its function is as follows. Neuraminidase activity ensures the efficient spread of the virus by dissociating the mature virions from the neuraminic acid containing glycoproteins. The sequence is that of Hemagglutinin-neuraminidase (HN) from Newcastle disease virus (strain Iba/85) (NDV).